The sequence spans 295 residues: Aspartate carbamoyltransferase catalytic subunit (295 aa).

Carbamoyl phosphate is bound by residues arginine 49 and threonine 50. Lysine 77 provides a ligand contact to L-aspartate. Arginine 99, histidine 127, and glutamine 130 together coordinate carbamoyl phosphate. L-aspartate contacts are provided by arginine 161 and arginine 212. Residues glycine 251 and proline 252 each contribute to the carbamoyl phosphate site.

This sequence belongs to the aspartate/ornithine carbamoyltransferase superfamily. ATCase family. Heterododecamer (2C3:3R2) of six catalytic PyrB chains organized as two trimers (C3), and six regulatory PyrI chains organized as three dimers (R2).

It carries out the reaction carbamoyl phosphate + L-aspartate = N-carbamoyl-L-aspartate + phosphate + H(+). It functions in the pathway pyrimidine metabolism; UMP biosynthesis via de novo pathway; (S)-dihydroorotate from bicarbonate: step 2/3. Its function is as follows. Catalyzes the condensation of carbamoyl phosphate and aspartate to form carbamoyl aspartate and inorganic phosphate, the committed step in the de novo pyrimidine nucleotide biosynthesis pathway. In Aliarcobacter butzleri (strain RM4018) (Arcobacter butzleri), this protein is Aspartate carbamoyltransferase catalytic subunit.